Here is a 102-residue protein sequence, read N- to C-terminus: Envelope protein US9 (102 aa).

At 1–75 the chain is on the intravirion side; sequence MAGQNTMEGE…KIYHRKKFCY (75 aa). Positions 14-15 match the Di-leucine internalization motif motif; sequence LL. The tract at residues 41 to 55 is acidic; sequence EKCYYSDSENETADE. Phosphoserine; by host CK2 is present on residues serine 46 and serine 48. A helical; Signal-anchor for type II membrane protein membrane pass occupies residues 76–96; it reads ITLIIVFVFAMTGAAFALGYI. Residues 97–102 lie on the Virion surface side of the membrane; the sequence is TSQFVG.

The protein belongs to the alphaherpesvirinae envelope protein US9 family. Post-translationally, phosphorylated on serines within the acidic cluster, possibly by host CK2. Phosphorylation determines whether endocytosed viral US9 traffics to the trans-Golgi network or recycles to the cell membrane.

It localises to the virion membrane. It is found in the host Golgi apparatus membrane. Its subcellular location is the host Golgi apparatus. The protein localises to the host trans-Golgi network. The protein resides in the host cell membrane. In terms of biological role, essential for the anterograde spread of the infection throughout the host nervous system. Together with the gE/gI heterodimer, US9 is involved in the sorting and transport of viral structural components toward axon tips. This chain is Envelope protein US9, found in Varicella-zoster virus (strain Dumas) (HHV-3).